An 867-amino-acid polypeptide reads, in one-letter code: GATOR2 complex protein Mio (867 aa).

WD repeat units follow at residues 51-86 (ANES…GICN), 100-144 (RQQR…PKET), 149-188 (GVGE…ATCQ), 190-228 (IQTK…SPLR), and 231-272 (QSSK…TDNS). Residues 350–376 (PASPTSTAATPTQQQPTSSCSTNSGSS) are compositionally biased toward low complexity. The disordered stretch occupies residues 350 to 378 (PASPTSTAATPTQQQPTSSCSTNSGSSLD). Residues 739–777 (LSCNFCGKSVSNALLDEPRPRSTTTSTNRLSSCPSCRKP) form a C4-type zinc finger. Residues C741, C744, C771, C774, C784, C821, C824, H826, H829, H832, C843, C848, and C852 each coordinate Zn(2+). The RING-type; atypical zinc-finger motif lies at 778 to 857 (LPRCSLCLMH…CNCRCFDMDG (80 aa)).

This sequence belongs to the WD repeat mio family. In terms of assembly, component of the GATOR complex consisting of mio, Nup44A/Seh1, Im11, Nplr3, Nplr2, Wdr24, Wdr59 and Sec13. Within the GATOR complex, probable component of the GATOR2 subcomplex which is likely composed of mio, Nup44A/Seh1, Wdr24, Wdr59 and Sec13. Interacts with Wdr24. Interacts with nucleoporin Nup44A/Seh1. The GATOR2 complex associates with unmet in the absence of S-adenosyl-L-methionine; the mio-Wdr24-Nup44A subcomplex is essential and sufficient for this interaction while Wdr59 and Sec13 are dispensable. This association acts as a nutrient sensor to inhibit mTORC1 signaling in the absence of methionine. As to expression, present in the oocyte.

It is found in the nucleus. The protein resides in the lysosome. An essential component of the GATOR subcomplex GATOR2 which functions as an activator of the amino acid-sensing branch of the mTORC1 signaling pathway. The two GATOR subcomplexes, GATOR1 and GATOR2, regulate the mTORC1 pathway in order to mediate metabolic homeostasis, female gametogenesis and the response to amino acid limitation and complete starvation. GATOR2 activates the mTORC1 signaling pathway through the inhibition of the GATOR1 subcomplex, controlling the switch to cell proliferation and growth under nutrient replete conditions and during female oocyte development. This component is required for activating mTORC1 specifically in germline cells to promote cell growth and maintain the oocyte fate. GATOR1 and GATOR2 act at different stages of oogenesis to regulate mTORC1 in order to control meiotic entry and promote oocyte growth and development. After exactly four mitotic cyst divisions, the GATOR1 complex members (Iml1, Nprl2 and Nprl3) down-regulate mTORC1 to slow cellular metabolism and promote the mitotic/meiotic transition. At later stages of oogenesis, the mio and Nup44A components of the GATOR2 complex inhibit GATOR1 and thus activate mTORC1 to promote meiotic progression, and drive oocyte growth and development. In addition to its role in the regulation of the mTORC1 complex, functions independently of mTORC1 to prevent the inappropriate accumulation of autolysosomes in germline tissues. This chain is GATOR2 complex protein Mio, found in Drosophila melanogaster (Fruit fly).